The chain runs to 310 residues: Aspartate carbamoyltransferase catalytic subunit (310 aa).

Carbamoyl phosphate-binding residues include R58 and T59. K86 contacts L-aspartate. Carbamoyl phosphate is bound by residues R108, H137, and Q140. L-aspartate is bound by residues R170 and R225. Carbamoyl phosphate contacts are provided by G264 and P265.

It belongs to the aspartate/ornithine carbamoyltransferase superfamily. ATCase family. As to quaternary structure, heterododecamer (2C3:3R2) of six catalytic PyrB chains organized as two trimers (C3), and six regulatory PyrI chains organized as three dimers (R2).

The enzyme catalyses carbamoyl phosphate + L-aspartate = N-carbamoyl-L-aspartate + phosphate + H(+). It functions in the pathway pyrimidine metabolism; UMP biosynthesis via de novo pathway; (S)-dihydroorotate from bicarbonate: step 2/3. Catalyzes the condensation of carbamoyl phosphate and aspartate to form carbamoyl aspartate and inorganic phosphate, the committed step in the de novo pyrimidine nucleotide biosynthesis pathway. The protein is Aspartate carbamoyltransferase catalytic subunit of Coxiella burnetii (strain CbuK_Q154) (Coxiella burnetii (strain Q154)).